The chain runs to 150 residues: UPF0756 membrane protein YE1142 (150 aa).

The next 4 helical transmembrane spans lie at 1–21, 51–71, 88–108, and 114–134; these read MAAL…GIIS, YGLT…IASG, ILAI…VSLM, and VVAG…GVPV.

Belongs to the UPF0756 family.

It is found in the cell membrane. The polypeptide is UPF0756 membrane protein YE1142 (Yersinia enterocolitica serotype O:8 / biotype 1B (strain NCTC 13174 / 8081)).